The chain runs to 275 residues: U6 snRNA phosphodiesterase 1 (275 aa).

The interval 1 to 25 is disordered; sequence MEFLKHYEDDEDQDDENNTKDENVN. Histidine 122 functions as the Proton acceptor in the catalytic mechanism. AMP is bound by residues 122–124, tyrosine 206, and 208–214; these read HIS and NPEPHLS. Residues tyrosine 206 and 210–214 contribute to the UMP site; that span reads EPHLS. Histidine 212 (proton donor) is an active-site residue.

Belongs to the 2H phosphoesterase superfamily. USB1 family.

The protein resides in the nucleus. It catalyses the reaction a 3'-end uridylyl-uridine-RNA = a 3'-end 2',3'-cyclophospho-uridine-RNA + uridine. 3'-5' RNA exonuclease that trims the 3' end of oligo(U) tracts of the pre-U6 small nuclear RNA (snRNA) molecule, leading to the formation of a mature U6 snRNA 3' end-terminated with a 2',3'-cyclic phosphate. Participates in the U6 snRNA 3' end processing that prevents U6 snRNA degradation. This chain is U6 snRNA phosphodiesterase 1, found in Dictyostelium discoideum (Social amoeba).